Reading from the N-terminus, the 443-residue chain is tRNA modification GTPase MnmE (443 aa).

(6S)-5-formyl-5,6,7,8-tetrahydrofolate contacts are provided by Arg-23, Glu-80, and Lys-120. A TrmE-type G domain is found at 217–367 (GFEVVILGAP…LLAEIGRRAA (151 aa)). GTP contacts are provided by residues 227 to 232 (NAGKSS), 246 to 252 (TDEPGTT), and 271 to 274 (DTAG). Positions 231 and 252 each coordinate Mg(2+). Residue Lys-443 coordinates (6S)-5-formyl-5,6,7,8-tetrahydrofolate.

It belongs to the TRAFAC class TrmE-Era-EngA-EngB-Septin-like GTPase superfamily. TrmE GTPase family. As to quaternary structure, homodimer. Heterotetramer of two MnmE and two MnmG subunits. Requires K(+) as cofactor.

The protein localises to the cytoplasm. Functionally, exhibits a very high intrinsic GTPase hydrolysis rate. Involved in the addition of a carboxymethylaminomethyl (cmnm) group at the wobble position (U34) of certain tRNAs, forming tRNA-cmnm(5)s(2)U34. The polypeptide is tRNA modification GTPase MnmE (Mesorhizobium japonicum (strain LMG 29417 / CECT 9101 / MAFF 303099) (Mesorhizobium loti (strain MAFF 303099))).